The sequence spans 248 residues: Flagellar L-ring protein (248 aa).

Positions 1–23 (MRHAFRHSVRTLGLLGLLPVLSA) are cleaved as a signal peptide. Cys-24 is lipidated: N-palmitoyl cysteine. Cys-24 carries S-diacylglycerol cysteine lipidation.

This sequence belongs to the FlgH family. The basal body constitutes a major portion of the flagellar organelle and consists of four rings (L,P,S, and M) mounted on a central rod.

It localises to the cell outer membrane. The protein localises to the bacterial flagellum basal body. Functionally, assembles around the rod to form the L-ring and probably protects the motor/basal body from shearing forces during rotation. The sequence is that of Flagellar L-ring protein from Gluconobacter oxydans (strain 621H) (Gluconobacter suboxydans).